The following is a 638-amino-acid chain: Fructose-1,6-bisphosphatase class 3 (638 aa).

This sequence belongs to the FBPase class 3 family. The cofactor is Mn(2+).

The enzyme catalyses beta-D-fructose 1,6-bisphosphate + H2O = beta-D-fructose 6-phosphate + phosphate. Its pathway is carbohydrate biosynthesis; gluconeogenesis. In Pediococcus pentosaceus (strain ATCC 25745 / CCUG 21536 / LMG 10740 / 183-1w), this protein is Fructose-1,6-bisphosphatase class 3.